We begin with the raw amino-acid sequence, 313 residues long: Porphobilinogen deaminase (313 aa).

Cys-242 carries the S-(dipyrrolylmethanemethyl)cysteine modification.

This sequence belongs to the HMBS family. As to quaternary structure, monomer. Requires dipyrromethane as cofactor.

It catalyses the reaction 4 porphobilinogen + H2O = hydroxymethylbilane + 4 NH4(+). It participates in porphyrin-containing compound metabolism; protoporphyrin-IX biosynthesis; coproporphyrinogen-III from 5-aminolevulinate: step 2/4. Its function is as follows. Tetrapolymerization of the monopyrrole PBG into the hydroxymethylbilane pre-uroporphyrinogen in several discrete steps. The chain is Porphobilinogen deaminase (hemC) from Proteus mirabilis.